The following is a 550-amino-acid chain: Mitochondrial distribution and morphology protein 12 (550 aa).

Residues 1-550 (MSIDLNWETV…VYPSYWTFLV (550 aa)) enclose the SMP-LTD domain. 3 disordered regions span residues 76–97 (SDLASESGSEEDEEEIADDRRR), 196–386 (GHGH…KLRE), and 466–489 (ENEVDGGEGDKQTGFKSPPGGGNG). Residues 83–92 (GSEEDEEEIA) show a composition bias toward acidic residues. The segment covering 270–286 (PPFPPSSTGGPSPPPGL) has biased composition (pro residues). Residues 288 to 305 (KPHHPHHPHHHHAHHAHP) show a composition bias toward basic residues. Residues 327-344 (PTRDKTTPSHHPDPEDVH) are compositionally biased toward basic and acidic residues. Polar residues predominate over residues 346–355 (PNTTTTNKQR). Residues 356-371 (STSPATSSPLATSAQE) are compositionally biased toward low complexity.

The protein belongs to the MDM12 family. Component of the ER-mitochondria encounter structure (ERMES) or MDM complex, composed of MMM1, MDM10, MDM12 and MDM34. An MMM1 homodimer associates with one molecule of MDM12 on each side in a pairwise head-to-tail manner, and the SMP-LTD domains of MMM1 and MDM12 generate a continuous hydrophobic tunnel for phospholipid trafficking.

Its subcellular location is the mitochondrion outer membrane. It is found in the endoplasmic reticulum membrane. Component of the ERMES/MDM complex, which serves as a molecular tether to connect the endoplasmic reticulum (ER) and mitochondria. Components of this complex are involved in the control of mitochondrial shape and protein biogenesis, and function in nonvesicular lipid trafficking between the ER and mitochondria. MDM12 is required for the interaction of the ER-resident membrane protein MMM1 and the outer mitochondrial membrane-resident beta-barrel protein MDM10. The MDM12-MMM1 subcomplex functions in the major beta-barrel assembly pathway that is responsible for biogenesis of all mitochondrial outer membrane beta-barrel proteins, and acts in a late step after the SAM complex. The MDM10-MDM12-MMM1 subcomplex further acts in the TOM40-specific pathway after the action of the MDM12-MMM1 complex. Essential for establishing and maintaining the structure of mitochondria and maintenance of mtDNA nucleoids. The polypeptide is Mitochondrial distribution and morphology protein 12 (Podospora anserina (strain S / ATCC MYA-4624 / DSM 980 / FGSC 10383) (Pleurage anserina)).